We begin with the raw amino-acid sequence, 234 residues long: Putative methyltransferase-like protein 15P1 (234 aa).

S-adenosyl-L-methionine is bound by residues 100–102 (GGH), aspartate 119, phenylalanine 146, aspartate 169, and glutamine 176.

It belongs to the methyltransferase superfamily. RsmH family.

In terms of biological role, probable S-adenosyl-L-methionine-dependent methyltransferase. The chain is Putative methyltransferase-like protein 15P1 (METTL15P1) from Homo sapiens (Human).